A 352-amino-acid chain; its full sequence is Thymidine kinase (352 aa).

32–39 (GVYGIGKS) provides a ligand contact to ATP. Catalysis depends on E60, which acts as the Proton acceptor. Substrate contacts are provided by Y78, Q102, F105, and F148. Residue R192 participates in ATP binding. R198 is a binding site for substrate.

Belongs to the herpesviridae thymidine kinase family. Homodimer.

It carries out the reaction thymidine + ATP = dTMP + ADP + H(+). Functionally, catalyzes the transfer of the gamma-phospho group of ATP to thymidine to generate dTMP in the salvage pathway of pyrimidine synthesis. The dTMP serves as a substrate for DNA polymerase during viral DNA replication. Allows the virus to be reactivated and to grow in non-proliferative cells lacking a high concentration of phosphorylated nucleic acid precursors. In Equine herpesvirus 4 (strain 1942) (EHV-4), this protein is Thymidine kinase.